Consider the following 103-residue polypeptide: Integration host factor subunit alpha (103 aa).

The interval 55-74 (CREKPQRPGRNPKTGEEMPI) is disordered.

Belongs to the bacterial histone-like protein family. Heterodimer of an alpha and a beta chain.

Functionally, this protein is one of the two subunits of integration host factor, a specific DNA-binding protein that functions in genetic recombination as well as in transcriptional and translational control. This chain is Integration host factor subunit alpha, found in Thiobacillus denitrificans (strain ATCC 25259 / T1).